The following is a 173-amino-acid chain: MMKMMIMSSSNLMNINFMKMNHPMSIMMTIIIQTLFISMMTGTMMESFWLSYILLLTFLGGMMVLFIYITSIASNEMFKIKINSIIIIVYMMIILSTLMYKLDKTISTEMIKNSEIMNLNYSINFKEMSTSLVKLYNNPTVIITIMMMIYLFITLLAVVKITNINQGPMRKMS.

Helical transmembrane passes span methionine 24 to methionine 44, tryptophan 49 to isoleucine 69, isoleucine 80 to tyrosine 100, and proline 139 to valine 159.

It belongs to the complex I subunit 6 family.

The protein localises to the mitochondrion membrane. It carries out the reaction a ubiquinone + NADH + 5 H(+)(in) = a ubiquinol + NAD(+) + 4 H(+)(out). Its function is as follows. Core subunit of the mitochondrial membrane respiratory chain NADH dehydrogenase (Complex I) that is believed to belong to the minimal assembly required for catalysis. Complex I functions in the transfer of electrons from NADH to the respiratory chain. The immediate electron acceptor for the enzyme is believed to be ubiquinone. The polypeptide is NADH-ubiquinone oxidoreductase chain 6 (ND6) (Locusta migratoria (Migratory locust)).